Consider the following 1163-residue polypeptide: Integrin alpha-X (1163 aa).

A signal peptide spans 1–19; sequence MTRTRAALLLFTALATSLG. Residues 20–1107 are Extracellular-facing; the sequence is FNLDTEELTA…EKYKVHNPTP (1088 aa). 2 FG-GAP repeats span residues 23–78 and 79–138; these read DTEE…ACEP and IGLQ…TQRL. Asparagine 61 is a glycosylation site (N-linked (GlcNAc...) asparagine). Residues cysteine 69 and cysteine 76 are joined by a disulfide bond. Residue asparagine 89 is glycosylated (N-linked (GlcNAc...) asparagine). Intrachain disulfides connect cysteine 108/cysteine 126 and cysteine 116/cysteine 145. 4 residues coordinate Mg(2+): aspartate 157, serine 159, serine 161, and aspartate 259. The region spanning 165–339 is the VWFA domain; sequence RNFATMMNFV…KEKIFAIEGT (175 aa). FG-GAP repeat units lie at residues 340–391, 392–443, 444–504, 507–565, and 570–630; these read ETTS…PTFI, NMSQ…SRQW, RMKA…WRRW, DAVL…PSIS, and QRIA…FIPA. Asparagine 392 is a glycosylation site (N-linked (GlcNAc...) asparagine). 4 residues coordinate Ca(2+): aspartate 466, aspartate 468, aspartate 470, and aspartate 474. A disulfide bond links cysteine 495 and cysteine 506. Residues aspartate 530, asparagine 532, aspartate 534, aspartate 538, aspartate 593, aspartate 597, and aspartate 601 each contribute to the Ca(2+) site. 2 disulfides stabilise this stretch: cysteine 639-cysteine 722 and cysteine 655-cysteine 712. N-linked (GlcNAc...) asparagine glycans are attached at residues asparagine 697 and asparagine 735. Disulfide bonds link cysteine 771–cysteine 777 and cysteine 848–cysteine 863. 2 N-linked (GlcNAc...) asparagine glycosylation sites follow: asparagine 899 and asparagine 939. Disulfide bonds link cysteine 998–cysteine 1022 and cysteine 1027–cysteine 1032. A glycan (N-linked (GlcNAc...) asparagine) is linked at asparagine 1050. The helical transmembrane segment at 1108-1128 threads the bilayer; that stretch reads LIVGSSIGGLLLLALITAVLY. Topologically, residues 1129-1163 are cytoplasmic; that stretch reads KVGFFKRQYKEMMEEANGQIAPENGTQTPSPPSEK. Positions 1131–1135 match the GFFKR motif motif; the sequence is GFFKR.

Belongs to the integrin alpha chain family. As to quaternary structure, heterodimer of an alpha and a beta subunit. Alpha-X associates with beta-2. In terms of tissue distribution, predominantly expressed in monocytes and granulocytes.

Its subcellular location is the membrane. Its function is as follows. Integrin alpha-X/beta-2 is a receptor for fibrinogen. It recognizes the sequence G-P-R in fibrinogen. It mediates cell-cell interaction during inflammatory responses. It is especially important in monocyte adhesion and chemotaxis. The sequence is that of Integrin alpha-X (ITGAX) from Homo sapiens (Human).